Here is a 227-residue protein sequence, read N- to C-terminus: ATP-dependent Clp protease proteolytic subunit 1 (227 aa).

Serine 124 (nucleophile) is an active-site residue. Residue histidine 149 is part of the active site.

Belongs to the peptidase S14 family. Fourteen ClpP subunits assemble into 2 heptameric rings which stack back to back to give a disk-like structure with a central cavity, resembling the structure of eukaryotic proteasomes.

It is found in the cytoplasm. The enzyme catalyses Hydrolysis of proteins to small peptides in the presence of ATP and magnesium. alpha-casein is the usual test substrate. In the absence of ATP, only oligopeptides shorter than five residues are hydrolyzed (such as succinyl-Leu-Tyr-|-NHMec, and Leu-Tyr-Leu-|-Tyr-Trp, in which cleavage of the -Tyr-|-Leu- and -Tyr-|-Trp bonds also occurs).. Functionally, cleaves peptides in various proteins in a process that requires ATP hydrolysis. Has a chymotrypsin-like activity. Plays a major role in the degradation of misfolded proteins. This is ATP-dependent Clp protease proteolytic subunit 1 from Rhodopirellula baltica (strain DSM 10527 / NCIMB 13988 / SH1).